The chain runs to 628 residues: Nuclear receptor subfamily 4 group A member 3 (628 aa).

Positions 1–112 are activation function (AF)-1 domain; that stretch reads MPCVQAQYSP…HHHHHHHHHH (112 aa). The tract at residues 1–140 is required for DNA-PK heterotrimer; that stretch reads MPCVQAQYSP…PSTSMYFKQS (140 aa). The tract at residues 1-293 is interaction with NCOA1, NCOA2, NCOA3 and KAT2B; the sequence is MPCVQAQYSP…NRSSSSGEGT (293 aa). 2 disordered regions span residues 96–163 and 269–290; these read HGYH…DELP and ASSL…SSSG. Over residues 97–113 the composition is skewed to basic residues; sequence GYHHHHHHHHHHHHHHQ. The segment covering 142-151 has biased composition (pro residues); that stretch reads PSTPTTPGFP. Over residues 270 to 289 the composition is skewed to low complexity; that stretch reads SSLLGESPSLPSPPNRSSSS. The nuclear receptor DNA-binding region spans 291–366; it reads EGTCAVCGDN…VGMVKEVVRT (76 aa). NR C4-type zinc fingers lie at residues 294 to 314 and 330 to 354; these read CAVC…CEGC and CLAN…FQKC. The segment at 366-396 is disordered; sequence TDSLKGRRGRLPSKPKSPLQQEPSQPSPPSP. Low complexity predominate over residues 379–389; it reads KPKSPLQQEPS. The interaction with KAT2B stretch occupies residues 381–628; it reads KSPLQQEPSQ…DKLFLDTLPF (248 aa). Positions 396–625 constitute an NR LBD domain; the sequence is PPICMMNALV…SVIDKLFLDT (230 aa).

The protein belongs to the nuclear hormone receptor family. NR4 subfamily. As to quaternary structure, interacts with SIX3 (via homeobox); differentially regulates the transcriptional activities of NR4A3. Interacts with NR3C1 (via nuclear receptor DNA-binding domain); the interactions represses transcription activity of NR4A3 on the POMC promoter Nur response element (NurRE). Interacts with TRIM28; the interactions potentiates NR4A3 activity on NurRE promoter. Binds DNA as a monomer and homodimer. Interacts with PARP1; activates PARP1 by improving acetylation of PARP1 and suppressing the interaction between PARP1 and SIRT1. Interacts with the constituents of DNA-PK heterotrimer PRKDC, XRCC6 and XRCC5; phosphorylates and prevents NR4A3 ubiquitinylation and degradation. Interacts with NCOA2; potentiates the activity of the NR4A3. Interacts with NCOA1, NCOA3, MED1 and KAT2B. Interacts with EP300 and NCOA2; mediates the recruitment of MED1 in the coactivator complex. Post-translationally, phosphorylated by PRKDC. In terms of tissue distribution, expressed at high levels in cultured apoptotic neuronal cells and fetal brain, and at low level in adult brain.

The protein resides in the nucleus. Its function is as follows. Transcriptional activator that binds to regulatory elements in promoter regions in a cell- and response element (target)-specific manner. Induces gene expression by binding as monomers to the NR4A1 response element (NBRE) 5'-AAAAGGTCA-3' site and as homodimers to the Nur response element (NurRE) site in the promoter of their regulated target genes. Plays a role in the regulation of proliferation, survival and differentiation of many different cell types and also in metabolism and inflammation. Mediates proliferation of vascular smooth muscle, myeloid progenitor cell and type B pancreatic cells; promotes mitogen-induced vascular smooth muscle cell proliferation through transactivation of SKP2 promoter by binding a NBRE site. Upon PDGF stimulation, stimulates vascular smooth muscle cell proliferation by regulating CCND1 and CCND2 expression. In islets, induces type B pancreatic cell proliferation through up-regulation of genes that activate cell cycle, as well as genes that cause degradation of the CDKN1A. Negatively regulates myeloid progenitor cell proliferation by repressing RUNX1 in a NBRE site-independent manner. During inner ear, plays a role as a key mediator of the proliferative growth phase of semicircular canal development. Also mediates survival of neuron and smooth muscle cells; mediates CREB-induced neuronal survival, and during hippocampus development, plays a critical role in pyramidal cell survival and axonal guidance. Is required for S phase entry of the cell cycle and survival of smooth muscle cells by inducing CCND1, resulting in RB1 phosphorylation. Binds to NBRE motif in CCND1 promoter, resulting in the activation of the promoter and CCND1 transcription. Also plays a role in inflammation; Upon TNF stimulation, mediates monocyte adhesion by inducing the expression of VCAM1 and ICAM1 by binding to the NBRE consensus site. In mast cells activated by Fc-epsilon receptor cross-linking, promotes the synthesis and release of cytokines but impairs events leading to degranulation. Also plays a role in metabolism; by modulating feeding behavior; and by playing a role in energy balance by inhibiting the glucocorticoid-induced orexigenic neuropeptides AGRP expression, at least in part by forming a complex with activated NR3C1 on the AGRP-glucocorticoid response element (GRE), and thus weakening the DNA binding activity of NR3C1. Upon catecholamines stimulation, regulates gene expression that controls oxidative metabolism in skeletal muscle. Plays a role in glucose transport by regulating translocation of the SLC2A4 glucose transporter to the cell surface. Finally, during gastrulation plays a crucial role in the formation of anterior mesoderm by controlling cell migration. Also participates in cardiac hypertrophy by activating PARP1. In Rattus norvegicus (Rat), this protein is Nuclear receptor subfamily 4 group A member 3 (Nr4a3).